Reading from the N-terminus, the 456-residue chain is Methylenetetrahydrofolate--tRNA-(uracil-5-)-methyltransferase TrmFO (456 aa).

11 to 16 serves as a coordination point for FAD; sequence GGGLAG.

Belongs to the MnmG family. TrmFO subfamily. The cofactor is FAD.

It localises to the cytoplasm. The catalysed reaction is uridine(54) in tRNA + (6R)-5,10-methylene-5,6,7,8-tetrahydrofolate + NADH + H(+) = 5-methyluridine(54) in tRNA + (6S)-5,6,7,8-tetrahydrofolate + NAD(+). It carries out the reaction uridine(54) in tRNA + (6R)-5,10-methylene-5,6,7,8-tetrahydrofolate + NADPH + H(+) = 5-methyluridine(54) in tRNA + (6S)-5,6,7,8-tetrahydrofolate + NADP(+). Functionally, catalyzes the folate-dependent formation of 5-methyl-uridine at position 54 (M-5-U54) in all tRNAs. The chain is Methylenetetrahydrofolate--tRNA-(uracil-5-)-methyltransferase TrmFO from Synechocystis sp. (strain ATCC 27184 / PCC 6803 / Kazusa).